The sequence spans 209 residues: Molybdenum cofactor guanylyltransferase (209 aa).

GTP is bound by residues 16–18 (LAG), K28, N56, D69, and D103. D103 contacts Mg(2+).

The protein belongs to the MobA family. In terms of assembly, monomer. It depends on Mg(2+) as a cofactor.

Its subcellular location is the cytoplasm. The catalysed reaction is Mo-molybdopterin + GTP + H(+) = Mo-molybdopterin guanine dinucleotide + diphosphate. In terms of biological role, transfers a GMP moiety from GTP to Mo-molybdopterin (Mo-MPT) cofactor (Moco or molybdenum cofactor) to form Mo-molybdopterin guanine dinucleotide (Mo-MGD) cofactor. This chain is Molybdenum cofactor guanylyltransferase, found in Rhizobium johnstonii (strain DSM 114642 / LMG 32736 / 3841) (Rhizobium leguminosarum bv. viciae).